Here is a 451-residue protein sequence, read N- to C-terminus: Uronate isomerase (451 aa).

The protein belongs to the metallo-dependent hydrolases superfamily. Uronate isomerase family.

It catalyses the reaction D-glucuronate = D-fructuronate. The enzyme catalyses aldehydo-D-galacturonate = keto-D-tagaturonate. It participates in carbohydrate metabolism; pentose and glucuronate interconversion. The chain is Uronate isomerase from Thermotoga neapolitana (strain ATCC 49049 / DSM 4359 / NBRC 107923 / NS-E).